The following is a 252-amino-acid chain: Chitooligosaccharide deacetylase (252 aa).

Positions 61 and 125 each coordinate Mg(2+).

Belongs to the YdjC deacetylase family. ChbG subfamily. As to quaternary structure, homodimer. The cofactor is Mg(2+).

It is found in the cytoplasm. The catalysed reaction is N,N'-diacetylchitobiose + H2O = N-acetyl-beta-D-glucosaminyl-(1-&gt;4)-D-glucosamine + acetate. The enzyme catalyses diacetylchitobiose-6'-phosphate + H2O = N'-monoacetylchitobiose-6'-phosphate + acetate. Its pathway is glycan degradation; chitin degradation. Functionally, involved in the degradation of chitin. ChbG is essential for growth on the acetylated chitooligosaccharides chitobiose and chitotriose but is dispensable for growth on cellobiose and chitosan dimer, the deacetylated form of chitobiose. Deacetylation of chitobiose-6-P and chitotriose-6-P is necessary for both the activation of the chb promoter by the regulatory protein ChbR and the hydrolysis of phosphorylated beta-glucosides by the phospho-beta-glucosidase ChbF. Catalyzes the removal of only one acetyl group from chitobiose-6-P to yield monoacetylchitobiose-6-P, the inducer of ChbR and the substrate of ChbF. The chain is Chitooligosaccharide deacetylase from Escherichia fergusonii (strain ATCC 35469 / DSM 13698 / CCUG 18766 / IAM 14443 / JCM 21226 / LMG 7866 / NBRC 102419 / NCTC 12128 / CDC 0568-73).